We begin with the raw amino-acid sequence, 145 residues long: Ornithine decarboxylase antizyme (145 aa).

This sequence belongs to the ODC antizyme family. As to quaternary structure, interacts with ODC1 and thereby sterically blocks ODC homodimerization.

Ornithine decarboxylase (ODC) antizyme protein that negatively regulates ODC activity and intracellular polyamine biosynthesis and uptake in response to increased intracellular polyamine levels. Binds to ODC monomers, inhibiting the assembly of the functional ODC homodimer, and targets the monomers for ubiquitin-independent proteolytic destruction by the 26S proteasome. The chain is Ornithine decarboxylase antizyme from Onchocerca volvulus.